The following is a 471-amino-acid chain: Trigger factor (471 aa).

The 96-residue stretch at 169–264 (GDVAVVDFKG…LKEIKEKELP (96 aa)) folds into the PPIase FKBP-type domain.

Belongs to the FKBP-type PPIase family. Tig subfamily.

It localises to the cytoplasm. The catalysed reaction is [protein]-peptidylproline (omega=180) = [protein]-peptidylproline (omega=0). Involved in protein export. Acts as a chaperone by maintaining the newly synthesized protein in an open conformation. Functions as a peptidyl-prolyl cis-trans isomerase. This is Trigger factor from Nostoc sp. (strain PCC 7120 / SAG 25.82 / UTEX 2576).